The following is a 108-amino-acid chain: Large ribosomal subunit protein uL22 (108 aa).

It belongs to the universal ribosomal protein uL22 family. In terms of assembly, part of the 50S ribosomal subunit.

In terms of biological role, this protein binds specifically to 23S rRNA; its binding is stimulated by other ribosomal proteins, e.g. L4, L17, and L20. It is important during the early stages of 50S assembly. It makes multiple contacts with different domains of the 23S rRNA in the assembled 50S subunit and ribosome. Its function is as follows. The globular domain of the protein is located near the polypeptide exit tunnel on the outside of the subunit, while an extended beta-hairpin is found that lines the wall of the exit tunnel in the center of the 70S ribosome. This is Large ribosomal subunit protein uL22 from Nitratiruptor sp. (strain SB155-2).